The following is a 305-amino-acid chain: RNA-binding protein with serine-rich domain 1 (305 aa).

Over residues 1–10 the composition is skewed to basic residues; that stretch reads MDLSGVKKKS. The interval 1-161 is necessary for interaction with SRP54, nuclear localization and exon-skipping; that stretch reads MDLSGVKKKS…KRRSPSPKPT (161 aa). The disordered stretch occupies residues 1-170; that stretch reads MDLSGVKKKS…TKVHIGRLTR (170 aa). The tract at residues 1-220 is necessary for interaction with the cleaved p110 isoform of CDC2L1; it reads MDLSGVKKKS…ENPDEAEKAL (220 aa). Residues Lys-7 and Lys-15 each participate in a glycyl lysine isopeptide (Lys-Gly) (interchain with G-Cter in SUMO2) cross-link. Over residues 33–59 the composition is skewed to basic and acidic residues; sequence DRSDEKSKDRSKDKGATKESSEKDRGR. Ser-53 is modified (phosphoserine; by CK2). Residues 68–126 show a composition bias toward low complexity; the sequence is ASSGSSSTRSRSSSTSSSGSSTSTGSSSGSSSSSASSRSGSSSTSRSSSSSSSSGSPSP. Residues 69–121 form a necessary for interactions with UPF2 and UPF3B and UPF2-dependent NMD region; it reads SSGSSSTRSRSSSTSSSGSSTSTGSSSGSSSSSASSRSGSSSTSRSSSSSSSS. Basic residues-rich tracts occupy residues 127–143 and 151–167; these read SRRR…KSKP and RKRR…HIGR. Phosphoserine occurs at positions 155 and 157. Residues 156-242 form a necessary for interaction with PNN and exon-skipping region; that stretch reads PSPKPTKVHI…ITATAVLAPW (87 aa). The tract at residues 159–244 is interaction with SAP18 and ACIN1; the sequence is KPTKVHIGRL…ATAVLAPWPR (86 aa). The residue at position 161 (Thr-161) is a Phosphothreonine. One can recognise an RRM domain in the interval 161–240; sequence TKVHIGRLTR…QEITATAVLA (80 aa). Position 218 is an N6-acetyllysine (Lys-218). The interval 238 to 305 is necessary for interaction with TRA2B, nuclear localization and exon-skipping; it reads VLAPWPRPPP…RSRSSSNSSR (68 aa). The tract at residues 240–305 is disordered; sequence APWPRPPPRR…RSRSSSNSSR (66 aa). Residues 242-262 are compositionally biased toward pro residues; sequence WPRPPPRRFSPPRRMLPPPPM. Residues 266–298 show a composition bias toward basic residues; it reads SPPRMRRRSRSPRRRSPVRRRSRSPGRRRHRSR.

Belongs to the splicing factor SR family. In terms of assembly, found in mRNA splicing-dependent exon junction complexes (EJC). Found in a post-splicing complex with NXF1, RBM8A, UPF1, UPF2, UPF3A, UPF3B and RNPS1. Component of the heterotrimeric ASAP (apoptosis- and splicing-associated protein) and PSAP complexes consisting of RNPS1, SAP18 and either ACIN1 or PNN, respectively; the ASAP and PSAP complexes probably are formed mutually exclusive. Component of the active spliceosome. Associates with polysomes. Interacts with the cleaved p110 isoform of CDC2L1, CSNK2A1, PNN, SART3, SRP54, SRRM1 and TRA2B/SFRS10. Phosphorylated on one or more of the four Ser/Thr residues (Ser-43, Thr-49, Ser-52 or Ser-53). Ser-53 phosphorylation site is important for splicing and translation stimulation activity in vitro. As to expression, ubiquitous.

Its subcellular location is the nucleus. The protein localises to the nucleus speckle. It localises to the cytoplasm. In terms of biological role, part of pre- and post-splicing multiprotein mRNP complexes. Auxiliary component of the splicing-dependent multiprotein exon junction complex (EJC) deposited at splice junction on mRNAs. The EJC is a dynamic structure consisting of core proteins and several peripheral nuclear and cytoplasmic associated factors that join the complex only transiently either during EJC assembly or during subsequent mRNA metabolism. Component of the ASAP and PSAP complexes which bind RNA in a sequence-independent manner and are proposed to be recruited to the EJC prior to or during the splicing process and to regulate specific excision of introns in specific transcription subsets. The ASAP complex can inhibit RNA processing during in vitro splicing reactions. The ASAP complex promotes apoptosis and is disassembled after induction of apoptosis. Enhances the formation of the ATP-dependent A complex of the spliceosome. Involved in both constitutive splicing and, in association with SRP54 and TRA2B/SFRS10, in distinctive modulation of alternative splicing in a substrate-dependent manner. Involved in the splicing modulation of BCL2L1/Bcl-X (and probably other apoptotic genes); specifically inhibits formation of proapoptotic isoforms such as Bcl-X(S); the activity is different from the established EJC assembly and function. Participates in mRNA 3'-end cleavage. Involved in UPF2-dependent nonsense-mediated decay (NMD) of mRNAs containing premature stop codons. Also mediates increase of mRNA abundance and translational efficiency. Binds spliced mRNA 20-25 nt upstream of exon-exon junctions. In Homo sapiens (Human), this protein is RNA-binding protein with serine-rich domain 1 (RNPS1).